The following is a 94-amino-acid chain: Neurotoxin LmNaTx45.2 (94 aa).

The signal sequence occupies residues 1 to 18; sequence MKLAILSLFLVFQIGVES. The 67-residue stretch at 20-86 folds into the LCN-type CS-alpha/beta domain; sequence KNGFALDHYG…IGDSRKNYCD (67 aa). Intrachain disulfides connect C34–C85, C44–C63, C48–C65, and C59–C85.

The protein belongs to the long (4 C-C) scorpion toxin superfamily. Sodium channel inhibitor family. Beta subfamily. Expressed by the venom gland.

It is found in the secreted. Functionally, binds voltage-independently at site-4 of sodium channels (Nav) and shift the voltage of activation toward more negative potentials thereby affecting sodium channel activation and promoting spontaneous and repetitive firing. This Lychas mucronatus (Chinese swimming scorpion) protein is Neurotoxin LmNaTx45.2.